Reading from the N-terminus, the 70-residue chain is Protein FlmC (70 aa).

Component of a type I toxin-antitoxin (TA) system. Either this protein or sequences upstream of it are required for translation of downstream flmA; this could be translationally coupled to flmA. The protein is Protein FlmC (flmC) of Escherichia coli (strain K12).